Here is a 577-residue protein sequence, read N- to C-terminus: Arginine--tRNA ligase (577 aa).

The 'HIGH' region signature appears at 122-132; that stretch reads PNVAKEMHVGH.

The protein belongs to the class-I aminoacyl-tRNA synthetase family. Monomer.

It is found in the cytoplasm. It carries out the reaction tRNA(Arg) + L-arginine + ATP = L-arginyl-tRNA(Arg) + AMP + diphosphate. This is Arginine--tRNA ligase (argS) from Salmonella typhimurium (strain SL1344).